Here is a 317-residue protein sequence, read N- to C-terminus: D-alanine--D-alanine ligase (317 aa).

In terms of domain architecture, ATP-grasp spans 111–308; the sequence is KRFWNGIGIP…YASLVEKIAQ (198 aa). 137–192 lines the ATP pocket; that stretch reads EEQMSYPVIVKPSREGSTIGINKAMNRAELDDALIKALEYDSDILVEEFIDGPEFT. Aspartate 262, glutamate 275, and asparagine 277 together coordinate Mg(2+).

It belongs to the D-alanine--D-alanine ligase family. Mg(2+) serves as cofactor. Requires Mn(2+) as cofactor.

It localises to the cytoplasm. The enzyme catalyses 2 D-alanine + ATP = D-alanyl-D-alanine + ADP + phosphate + H(+). It functions in the pathway cell wall biogenesis; peptidoglycan biosynthesis. In terms of biological role, cell wall formation. The sequence is that of D-alanine--D-alanine ligase from Marinomonas sp. (strain MWYL1).